Consider the following 126-residue polypeptide: UPF0102 protein MXAN_3551 (126 aa).

The protein belongs to the UPF0102 family.

The chain is UPF0102 protein MXAN_3551 from Myxococcus xanthus (strain DK1622).